The primary structure comprises 44 residues: Defensin heliomicin (44 aa).

Intrachain disulfides connect Cys-7–Cys-32, Cys-18–Cys-40, and Cys-22–Cys-42.

Its subcellular location is the secreted. Functionally, this peptide has potent anti-fungal activity. Has no activity against Gram-negative and Gram-positive bacteria. This chain is Defensin heliomicin, found in Heliothis virescens (Tobacco budworm moth).